The sequence spans 140 residues: Phosphopantetheine adenylyltransferase (140 aa).

Serine 9 is a binding site for substrate. ATP is bound by residues 9–10 (SF) and histidine 17. Substrate-binding residues include lysine 41, threonine 74, and arginine 88. Residues 89 to 91 (GLR), glutamate 99, and 124 to 130 (KRSLSST) contribute to the ATP site.

This sequence belongs to the bacterial CoaD family. As to quaternary structure, homohexamer. Mg(2+) serves as cofactor.

Its subcellular location is the cytoplasm. It carries out the reaction (R)-4'-phosphopantetheine + ATP + H(+) = 3'-dephospho-CoA + diphosphate. It participates in cofactor biosynthesis; coenzyme A biosynthesis; CoA from (R)-pantothenate: step 4/5. Functionally, reversibly transfers an adenylyl group from ATP to 4'-phosphopantetheine, yielding dephospho-CoA (dPCoA) and pyrophosphate. This chain is Phosphopantetheine adenylyltransferase, found in Mycoplasma mycoides subsp. mycoides SC (strain CCUG 32753 / NCTC 10114 / PG1).